Consider the following 463-residue polypeptide: Female germline-specific tumor suppressor gld-1 (463 aa).

Over residues M1 to G10 the composition is skewed to polar residues. The disordered stretch occupies residues M1–L76. A compositionally biased stretch (low complexity) spans V11–P31. Positions P135–I205 are qua1 domain; involved in homodimerization. Positions K208–A260 constitute a KH domain. The qua2 domain; involved in RNA binding stretch occupies residues A305 to A336. Residues N443–F463 form a disordered region. Positions S447–S457 are enriched in low complexity.

As to quaternary structure, homodimer. Post-translationally, phosphorylated by cdk-2 which may negatively regulate its expression in distal mitotic germline cells. Undergoes proteasomal degradation in proximal oocytes following mating. Expressed in proximal and distal oocytes in female worms but is eliminated from proximal oocytes following mating.

RNA-binding protein which recognizes the 5'-UACUCAU-3' RNA consensus sequence. Binds sequences in both the 5'coding and the 3'-UTR region of rme-2 mRNA. Binds sequences in the 3'-UTR region of cye-1 mRNA. Binds to cyb-2.1, cyb-2.2 and cyb-3 mRNA. Binds sequences in the 3'-UTR region of tra-2 mRNA. Binds to the 3' UTR of Notch receptor homolog glp-1, thereby repressing glp-1 translation in the embryo. Binding to the glp-1 3' UTR is inhibited by pos-1 binding to an overlapping binding site in the glp-1 3' UTR. Germ line-specific tumor suppressor essential for oogenesis. Controls the spatial pattern of translation of multiple oogenesis specific mRNAs (e.g. yolk receptor rme-2) by repression of translation during early meiotic prophase (leptotene to pachytene) and then derepression of translation during diplotene/ diakinesis, following its degradation. Also functions to promote the male sexual fate in the hermaphrodite germline but not the male germline. Represses translation of the vacuolar ATPase component vha-13 in the distal gonad. Functions redundantly with gld-2 to promote the initiation of meiotic development and/or inhibit stem cell proliferation. By regulating cye-1 expression, prevents entry into mitosis in meiotic germline cells. The sequence is that of Female germline-specific tumor suppressor gld-1 (gld-1) from Caenorhabditis elegans.